The following is a 398-amino-acid chain: Succinate--CoA ligase [ADP-forming] subunit beta (398 aa).

Positions 9–254 (KAVLREFGVS…ETEEDAKEIE (246 aa)) constitute an ATP-grasp domain. Residues lysine 46, 53-55 (GRG), glutamate 109, alanine 112, and glutamate 117 each bind ATP. Mg(2+) is bound by residues asparagine 209 and aspartate 223. Substrate is bound by residues asparagine 274 and 331–333 (GIM).

This sequence belongs to the succinate/malate CoA ligase beta subunit family. Heterotetramer of two alpha and two beta subunits. It depends on Mg(2+) as a cofactor.

It catalyses the reaction succinate + ATP + CoA = succinyl-CoA + ADP + phosphate. It carries out the reaction GTP + succinate + CoA = succinyl-CoA + GDP + phosphate. Its pathway is carbohydrate metabolism; tricarboxylic acid cycle; succinate from succinyl-CoA (ligase route): step 1/1. Its function is as follows. Succinyl-CoA synthetase functions in the citric acid cycle (TCA), coupling the hydrolysis of succinyl-CoA to the synthesis of either ATP or GTP and thus represents the only step of substrate-level phosphorylation in the TCA. The beta subunit provides nucleotide specificity of the enzyme and binds the substrate succinate, while the binding sites for coenzyme A and phosphate are found in the alpha subunit. In Afipia carboxidovorans (strain ATCC 49405 / DSM 1227 / KCTC 32145 / OM5) (Oligotropha carboxidovorans), this protein is Succinate--CoA ligase [ADP-forming] subunit beta.